A 494-amino-acid chain; its full sequence is Subtilisin-like serine protease Pen ch 18.0101 (494 aa).

Residues 1–16 form the signal peptide; it reads MKGFLSLTLLPLLVAA. Positions 17 to 136 are cleaved as a propeptide — removed in mature form; that stretch reads SPVAVNSIHN…IEKDSEVRTM (120 aa). The 94-residue stretch at 43–136 folds into the Inhibitor I9 domain; that stretch reads SYIVVFKKHV…IEKDSEVRTM (94 aa). In terms of domain architecture, Peptidase S8 spans 146–448; the sequence is PWGLARISHR…GGSANYTKIL (303 aa). IgE-binding regions lie at residues 180-198 and 209-231; these read VIDT…RANW and EDGN…GVAK. Catalysis depends on charge relay system residues Asp182 and His214. Asn244 and Asn280 each carry an N-linked (GlcNAc...) asparagine glycan. Ser376 (charge relay system) is an active-site residue. Asn443 carries N-linked (GlcNAc...) asparagine glycosylation. The propeptide at 454–494 is removed in mature form; sequence KAHNAETTVEDRIGIIIDSAEKAFHKELGAIYSEIKDAVSV.

This sequence belongs to the peptidase S8 family.

Functionally, serine protease. The sequence is that of Subtilisin-like serine protease Pen ch 18.0101 from Penicillium rubens.